We begin with the raw amino-acid sequence, 645 residues long: Threonine--tRNA ligase (645 aa).

Positions 3–64 constitute a TGS domain; the sequence is DMINITFPDG…EQDGTITIVT (62 aa). A catalytic region spans residues 247-544; the sequence is DHRKLGKELG…LLEEYKGAFP (298 aa). The Zn(2+) site is built by cysteine 340, histidine 391, and histidine 521.

The protein belongs to the class-II aminoacyl-tRNA synthetase family. Homodimer. Requires Zn(2+) as cofactor.

Its subcellular location is the cytoplasm. The enzyme catalyses tRNA(Thr) + L-threonine + ATP = L-threonyl-tRNA(Thr) + AMP + diphosphate + H(+). Catalyzes the attachment of threonine to tRNA(Thr) in a two-step reaction: L-threonine is first activated by ATP to form Thr-AMP and then transferred to the acceptor end of tRNA(Thr). Also edits incorrectly charged L-seryl-tRNA(Thr). The sequence is that of Threonine--tRNA ligase from Halalkalibacterium halodurans (strain ATCC BAA-125 / DSM 18197 / FERM 7344 / JCM 9153 / C-125) (Bacillus halodurans).